We begin with the raw amino-acid sequence, 154 residues long: Endoribonuclease YbeY (154 aa).

Residues His114, His118, and His124 each coordinate Zn(2+).

It belongs to the endoribonuclease YbeY family. Requires Zn(2+) as cofactor.

The protein localises to the cytoplasm. Functionally, single strand-specific metallo-endoribonuclease involved in late-stage 70S ribosome quality control and in maturation of the 3' terminus of the 16S rRNA. This chain is Endoribonuclease YbeY, found in Aggregatibacter actinomycetemcomitans (Actinobacillus actinomycetemcomitans).